The following is a 393-amino-acid chain: S-adenosylmethionine decarboxylase proenzyme (393 aa).

Catalysis depends on residues Glu-11 and Glu-14. The Schiff-base intermediate with substrate; via pyruvic acid role is filled by Ser-71. Ser-71 is modified (pyruvic acid (Ser); by autocatalysis). Cys-85 acts as the Proton donor; for catalytic activity in catalysis. Active-site proton acceptor; for processing activity residues include Ser-236 and His-249.

Belongs to the eukaryotic AdoMetDC family. Pyruvate serves as cofactor. Is synthesized initially as an inactive proenzyme. Formation of the active enzyme involves a self-maturation process in which the active site pyruvoyl group is generated from an internal serine residue via an autocatalytic post-translational modification. Two non-identical subunits are generated from the proenzyme in this reaction, and the pyruvate is formed at the N-terminus of the alpha chain, which is derived from the carboxyl end of the proenzyme. The post-translation cleavage follows an unusual pathway, termed non-hydrolytic serinolysis, in which the side chain hydroxyl group of the serine supplies its oxygen atom to form the C-terminus of the beta chain, while the remainder of the serine residue undergoes an oxidative deamination to produce ammonia and the pyruvoyl group blocking the N-terminus of the alpha chain.

It carries out the reaction S-adenosyl-L-methionine + H(+) = S-adenosyl 3-(methylsulfanyl)propylamine + CO2. The protein operates within amine and polyamine biosynthesis; S-adenosylmethioninamine biosynthesis; S-adenosylmethioninamine from S-adenosyl-L-methionine: step 1/1. The protein is S-adenosylmethionine decarboxylase proenzyme (SAMDC) of Hordeum chilense (Barley).